Here is a 367-residue protein sequence, read N- to C-terminus: Probable dual-specificity RNA methyltransferase RlmN (367 aa).

Residue Glu-92 is the Proton acceptor of the active site. One can recognise a Radical SAM core domain in the interval 98-326 (QEYGLSVCVT…YDTLKKNGIN (229 aa)). Cys-105 and Cys-341 are disulfide-bonded. Residues Cys-112, Cys-116, and Cys-119 each contribute to the [4Fe-4S] cluster site. S-adenosyl-L-methionine is bound by residues 164–165 (GE), Ser-196, 219–221 (SLH), and Asn-297. Catalysis depends on Cys-341, which acts as the S-methylcysteine intermediate.

It belongs to the radical SAM superfamily. RlmN family. It depends on [4Fe-4S] cluster as a cofactor.

Its subcellular location is the cytoplasm. The enzyme catalyses adenosine(2503) in 23S rRNA + 2 reduced [2Fe-2S]-[ferredoxin] + 2 S-adenosyl-L-methionine = 2-methyladenosine(2503) in 23S rRNA + 5'-deoxyadenosine + L-methionine + 2 oxidized [2Fe-2S]-[ferredoxin] + S-adenosyl-L-homocysteine. It catalyses the reaction adenosine(37) in tRNA + 2 reduced [2Fe-2S]-[ferredoxin] + 2 S-adenosyl-L-methionine = 2-methyladenosine(37) in tRNA + 5'-deoxyadenosine + L-methionine + 2 oxidized [2Fe-2S]-[ferredoxin] + S-adenosyl-L-homocysteine. In terms of biological role, specifically methylates position 2 of adenine 2503 in 23S rRNA and position 2 of adenine 37 in tRNAs. In Listeria welshimeri serovar 6b (strain ATCC 35897 / DSM 20650 / CCUG 15529 / CIP 8149 / NCTC 11857 / SLCC 5334 / V8), this protein is Probable dual-specificity RNA methyltransferase RlmN.